The primary structure comprises 248 residues: Probable transcriptional regulatory protein Acel_1346 (248 aa).

Belongs to the TACO1 family.

The protein resides in the cytoplasm. In Acidothermus cellulolyticus (strain ATCC 43068 / DSM 8971 / 11B), this protein is Probable transcriptional regulatory protein Acel_1346.